We begin with the raw amino-acid sequence, 526 residues long: Glucose-6-phosphate isomerase (526 aa).

The active-site Proton donor is the Glu-320. Residues His-349 and Lys-453 contribute to the active site.

The protein belongs to the GPI family.

It localises to the cytoplasm. The catalysed reaction is alpha-D-glucose 6-phosphate = beta-D-fructose 6-phosphate. The protein operates within carbohydrate biosynthesis; gluconeogenesis. Its pathway is carbohydrate degradation; glycolysis; D-glyceraldehyde 3-phosphate and glycerone phosphate from D-glucose: step 2/4. Its function is as follows. Catalyzes the reversible isomerization of glucose-6-phosphate to fructose-6-phosphate. The sequence is that of Glucose-6-phosphate isomerase from Rippkaea orientalis (strain PCC 8801 / RF-1) (Cyanothece sp. (strain PCC 8801)).